Here is a 71-residue protein sequence, read N- to C-terminus: DNA-directed RNA polymerase subunit omega (71 aa).

This sequence belongs to the RNA polymerase subunit omega family. The RNAP catalytic core consists of 2 alpha, 1 beta, 1 beta' and 1 omega subunit. When a sigma factor is associated with the core the holoenzyme is formed, which can initiate transcription.

The catalysed reaction is RNA(n) + a ribonucleoside 5'-triphosphate = RNA(n+1) + diphosphate. Promotes RNA polymerase assembly. Latches the N- and C-terminal regions of the beta' subunit thereby facilitating its interaction with the beta and alpha subunits. This Campylobacter concisus (strain 13826) protein is DNA-directed RNA polymerase subunit omega.